Consider the following 212-residue polypeptide: 3-oxo-tetronate 4-phosphate decarboxylase (212 aa).

E79 functions as the Proton acceptor in the catalytic mechanism. 3 residues coordinate Zn(2+): E79, H98, and H100. Y125 serves as the catalytic Proton donor. H165 contributes to the Zn(2+) binding site.

Belongs to the aldolase class II family. AraD/FucA subfamily. Requires Zn(2+) as cofactor.

It catalyses the reaction 3-dehydro-4-O-phospho-D-erythronate + H(+) = dihydroxyacetone phosphate + CO2. The enzyme catalyses 3-dehydro-4-O-phospho-L-erythronate + H(+) = dihydroxyacetone phosphate + CO2. Its function is as follows. Catalyzes the decarboxylation of 3-oxo-tetronate 4-phosphate to dihydroxyacetone phosphate (DHAP) and CO(2). The protein is 3-oxo-tetronate 4-phosphate decarboxylase of Escherichia coli O6:H1 (strain CFT073 / ATCC 700928 / UPEC).